Consider the following 549-residue polypeptide: MAAKDVIFGGEARARMVEGVNILANAVKVTLGPKGRNVVLERSFGAPTVTKDGVSVAKEIELKDKLQNMGAQMVKEVASKTSDNAGDGTTTATVLAQAIVREGMKYVAAGMNPMDLKRGIDKAVHALVAELKKASKATTTSKEIAQVGSISANSDESIGTIIANAMDKVGKEGVITVEDGKSLDNELDVVEGMQFDRGYLSPYFINNPEKQAALLDNPFVLLFDKKISNIRDLLPTLEQVAKAGRPLLIIAEEVDGEALATLVVNTIRGILKVVAVKAPGFGDRRKAMLEDIAILTGGKVIAEEVGLTLEKVTLADLGQAKRVEVGKENTTIIDGAGAAGDIEARVKQIRIQIEEATSDYDREKLQERVAKLAGGVALIKVGAATEVEMKEKKARVEDALHATRAAVEEGIVAGGGVALLRAKQAAGEIKGDNADQDAGIKLVLKAIEAPLREIVYNAGGEASVVVNAVLAGSGNYGFNAANDTYGDMIEMGILDPTKVTRTALQNAASVASLMLTTECMVAEAPKDEAAGGGMPGGMGGMGGMGGMDM.

Residues 30-33 (TLGP), Lys51, 87-91 (DGTTT), Gly415, 479-481 (NAA), and Asp495 contribute to the ATP site.

The protein belongs to the chaperonin (HSP60) family. As to quaternary structure, forms a cylinder of 14 subunits composed of two heptameric rings stacked back-to-back. Interacts with the co-chaperonin GroES.

It is found in the cytoplasm. The catalysed reaction is ATP + H2O + a folded polypeptide = ADP + phosphate + an unfolded polypeptide.. Its function is as follows. Together with its co-chaperonin GroES, plays an essential role in assisting protein folding. The GroEL-GroES system forms a nano-cage that allows encapsulation of the non-native substrate proteins and provides a physical environment optimized to promote and accelerate protein folding. The protein is Chaperonin GroEL of Leptothrix cholodnii (strain ATCC 51168 / LMG 8142 / SP-6) (Leptothrix discophora (strain SP-6)).